Reading from the N-terminus, the 769-residue chain is Bifunctional glycosyltransferase pgtA (769 aa).

The interval 25 to 210 (YQGINNLIIS…SVIFKRSIFT (186 aa)) is N-acetylgalactosamine 3-beta-galactosyltransferase. The segment covering 410–441 (NNINNNNNNNNNNNNNNNNNNNNNNNNNNNNN) has biased composition (low complexity). Positions 410–442 (NNINNNNNNNNNNNNNNNNNNNNNNNNNNNNNS) are disordered. The segment at 442-769 (SILNFISGIN…SVHIGELFIS (328 aa)) is alpha-1,2-fucosyltransferase.

Belongs to the glycosyltransferase 2 family.

It catalyses the reaction an N-acetyl-beta-D-glucosaminyl derivative + UDP-alpha-D-galactose = a beta-D-galactosyl-(1-&gt;3)-N-acetyl-beta-D-glucosaminyl derivative + UDP + H(+). The catalysed reaction is a beta-D-galactosyl-(1-&gt;3)-N-acetyl-beta-D-glucosaminyl derivative + GDP-beta-L-fucose = an alpha-L-Fuc-(1-&gt;2)-beta-D-Gal-(1-&gt;3)-beta-D-GlcNAc derivative + GDP + H(+). In terms of biological role, bifunctional protein composed of 2 glycosyltransferase domains involved in glycosylating skp1. The N-terminal part catalyzes the transfer of a galactose residue to GlcNAc-skp1 in a beta 1-3 linkage. The C-terminal part catalyzes the transfer of a fucose residue to Gal-GlcNAc-skp1 in an alpha 1-2 linkage. This Dictyostelium discoideum (Social amoeba) protein is Bifunctional glycosyltransferase pgtA (pgtA).